Reading from the N-terminus, the 359-residue chain is 5-amino-6-(D-ribitylamino)uracil--L-tyrosine 4-hydroxyphenyl transferase (359 aa).

Residues 45–282 (VTYVLNANIN…VYAISRIFFK (238 aa)) form the Radical SAM core domain. Residues cysteine 59, cysteine 63, and cysteine 66 each contribute to the [4Fe-4S] cluster site.

Belongs to the radical SAM superfamily. CofH family. Consists of two subunits, CofG and CofH. The cofactor is [4Fe-4S] cluster.

The catalysed reaction is 5-amino-6-(D-ribitylamino)uracil + L-tyrosine + S-adenosyl-L-methionine = 5-amino-5-(4-hydroxybenzyl)-6-(D-ribitylimino)-5,6-dihydrouracil + 2-iminoacetate + 5'-deoxyadenosine + L-methionine + H(+). Its pathway is cofactor biosynthesis; coenzyme F0 biosynthesis. Functionally, catalyzes the radical-mediated synthesis of 5-amino-5-(4-hydroxybenzyl)-6-(D-ribitylimino)-5,6-dihydrouracil from 5-amino-6-(D-ribitylamino)uracil and L-tyrosine. The sequence is that of 5-amino-6-(D-ribitylamino)uracil--L-tyrosine 4-hydroxyphenyl transferase from Methanococcus vannielii (strain ATCC 35089 / DSM 1224 / JCM 13029 / OCM 148 / SB).